The following is a 120-amino-acid chain: Hydrogenase maturation factor HypA (120 aa).

Residue His2 participates in Ni(2+) binding. Residues Cys73, His76, Cys89, and Cys92 each contribute to the Zn(2+) site.

Belongs to the HypA/HybF family.

In terms of biological role, involved in the maturation of [NiFe] hydrogenases. Required for nickel insertion into the metal center of the hydrogenase. The sequence is that of Hydrogenase maturation factor HypA from Deinococcus radiodurans (strain ATCC 13939 / DSM 20539 / JCM 16871 / CCUG 27074 / LMG 4051 / NBRC 15346 / NCIMB 9279 / VKM B-1422 / R1).